A 583-amino-acid chain; its full sequence is cAMP-dependent protein kinase catalytic subunit 3 (583 aa).

2 disordered regions span residues 51-75 (ATPT…TIGK) and 98-264 (SGTA…QTAK). Composition is skewed to polar residues over residues 52 to 69 (TPTQ…TGTP) and 98 to 107 (SGTAGSTSKL). Positions 108–162 (TTGNGSGNTMTSAYKIPSNNSTTANDSSNTETTFTFKLGRSNGRSSSNVASSESS) are enriched in low complexity. Over residues 163-176 (DPLESDYSEEDPEQ) the composition is skewed to acidic residues. Residues 181–200 (PDPATNSRSSSTATTTTTSS) are compositionally biased toward low complexity. The span at 205-219 (NDVDEEDEEDDENEG) shows a compositional bias: acidic residues. The span at 221–234 (GNGRDADDATHDSS) shows a compositional bias: basic and acidic residues. The span at 235 to 256 (ESIEEDDGNETDDEEDDDESEE) shows a compositional bias: acidic residues. The Protein kinase domain maps to 274–528 (YQIIKTVGTG…ADDVKRHRWF (255 aa)). ATP contacts are provided by residues 280-288 (VGTGTFGRV) and Lys303. The active-site Proton acceptor is the Asp397. One can recognise an AGC-kinase C-terminal domain in the interval 529–583 (KHLNWNDVYSKKLKPPILPDVHHDGDTKNFDDYPEKDWKPAKAVDQRDLQYFNDF).

This sequence belongs to the protein kinase superfamily. AGC Ser/Thr protein kinase family. cAMP subfamily. In terms of tissue distribution, expressed in embryonic mesoderm, and the optic lamina, wing disk and leg disks of third instar larvae. More abundant in adult head than adult body.

It catalyses the reaction L-seryl-[protein] + ATP = O-phospho-L-seryl-[protein] + ADP + H(+). The enzyme catalyses L-threonyl-[protein] + ATP = O-phospho-L-threonyl-[protein] + ADP + H(+). Functionally, does not have an essential role in development. In Drosophila melanogaster (Fruit fly), this protein is cAMP-dependent protein kinase catalytic subunit 3 (Pka-C3).